Reading from the N-terminus, the 212-residue chain is Adenylate kinase (212 aa).

10–15 (GAGKGT) is a binding site for ATP. Residues 30-59 (STGDMFRAAMANQTEMGRLAKSYIDKGELV) are NMP. AMP is bound by residues Thr-31, Arg-36, 57 to 59 (ELV), 86 to 89 (GYPR), and Gln-93. Positions 127–159 (GRIINRKTGETFHKVFNPPVDYKEEDYYQREDD) are LID. ATP contacts are provided by residues Arg-128 and 137-138 (TF). AMP contacts are provided by Arg-156 and Arg-167. Gln-195 serves as a coordination point for ATP.

Monomer.

Its subcellular location is the cytoplasm. The enzyme catalyses AMP + ATP = 2 ADP. The protein operates within purine metabolism; AMP biosynthesis via salvage pathway; AMP from ADP: step 1/1. Its function is as follows. Catalyzes the reversible transfer of the terminal phosphate group between ATP and AMP. Plays an important role in cellular energy homeostasis and in adenine nucleotide metabolism. This is Adenylate kinase from Streptococcus pyogenes serotype M6 (strain ATCC BAA-946 / MGAS10394).